The sequence spans 359 residues: 3-dehydroquinate synthase (359 aa).

NAD(+) is bound by residues 69-74 (DGEKYK), 103-107 (GVVGD), 127-128 (TT), Lys-140, Lys-149, and 167-170 (TLDT). Glu-182, His-245, and His-262 together coordinate Zn(2+).

Belongs to the sugar phosphate cyclases superfamily. Dehydroquinate synthase family. The cofactor is Co(2+). Zn(2+) serves as cofactor. NAD(+) is required as a cofactor.

It localises to the cytoplasm. It catalyses the reaction 7-phospho-2-dehydro-3-deoxy-D-arabino-heptonate = 3-dehydroquinate + phosphate. It functions in the pathway metabolic intermediate biosynthesis; chorismate biosynthesis; chorismate from D-erythrose 4-phosphate and phosphoenolpyruvate: step 2/7. In terms of biological role, catalyzes the conversion of 3-deoxy-D-arabino-heptulosonate 7-phosphate (DAHP) to dehydroquinate (DHQ). This is 3-dehydroquinate synthase from Ruthia magnifica subsp. Calyptogena magnifica.